We begin with the raw amino-acid sequence, 361 residues long: Histidinol-phosphate aminotransferase (361 aa).

Lys-219 is subject to N6-(pyridoxal phosphate)lysine.

Belongs to the class-II pyridoxal-phosphate-dependent aminotransferase family. Histidinol-phosphate aminotransferase subfamily. Homodimer. The cofactor is pyridoxal 5'-phosphate.

It catalyses the reaction L-histidinol phosphate + 2-oxoglutarate = 3-(imidazol-4-yl)-2-oxopropyl phosphate + L-glutamate. Its pathway is amino-acid biosynthesis; L-histidine biosynthesis; L-histidine from 5-phospho-alpha-D-ribose 1-diphosphate: step 7/9. The protein is Histidinol-phosphate aminotransferase of Acinetobacter baumannii (strain ATCC 17978 / DSM 105126 / CIP 53.77 / LMG 1025 / NCDC KC755 / 5377).